We begin with the raw amino-acid sequence, 196 residues long: Orotate phosphoribosyltransferase (196 aa).

117–125 (EDIVTTGLS) provides a ligand contact to 5-phospho-alpha-D-ribose 1-diphosphate. Orotate is bound by residues Thr121 and Arg149.

This sequence belongs to the purine/pyrimidine phosphoribosyltransferase family. PyrE subfamily. Homodimer. Mg(2+) is required as a cofactor.

It carries out the reaction orotidine 5'-phosphate + diphosphate = orotate + 5-phospho-alpha-D-ribose 1-diphosphate. The protein operates within pyrimidine metabolism; UMP biosynthesis via de novo pathway; UMP from orotate: step 1/2. Its function is as follows. Catalyzes the transfer of a ribosyl phosphate group from 5-phosphoribose 1-diphosphate to orotate, leading to the formation of orotidine monophosphate (OMP). In Methylorubrum extorquens (strain PA1) (Methylobacterium extorquens), this protein is Orotate phosphoribosyltransferase.